The chain runs to 492 residues: Signal transduction histidine-protein kinase/phosphatase MprB (492 aa).

Residues 1-27 are Cytoplasmic-facing; sequence MAFPPNSWRPTGPLPTSSLSLRWRVMM. Residues 28–48 form a helical membrane-spanning segment; the sequence is LAMSMVALVVVLMAVAVYAVV. Residues 49–165 lie on the Extracellular side of the membrane; that stretch reads SRALYDDLDN…TVQVLRRLGT (117 aa). A helical membrane pass occupies residues 166-186; that stretch reads VLLIVGGIGVAVAAIAGGAVA. An HAMP domain is found at 187–239; it reads RAGLRPVGRLTEAAERVARTDDLRPIPVVGSDELARLTEAFNMMLRALAESRE. Topologically, residues 187–492 are cytoplasmic; sequence RAGLRPVGRL…DRGGHTVATE (306 aa). Positions 247–467 constitute a Histidine kinase domain; it reads DAGHELRTPL…SVHMLLPGQR (221 aa). Position 250 is a phosphohistidine; by autocatalysis (H250). The disordered stretch occupies residues 470–492; that stretch reads DPGATRSAEGFVDDRGGHTVATE.

Requires Mg(2+) as cofactor. Mn(2+) serves as cofactor. In terms of processing, autophosphorylated.

Its subcellular location is the cell membrane. It carries out the reaction ATP + protein L-histidine = ADP + protein N-phospho-L-histidine.. Functionally, member of the two-component regulatory system MprB/MprA which contributes to maintaining a balance among several systems involved in stress resistance and is required for establishment and maintenance of persistent infection in the host. In response to environmental signals MprB acts both as a membrane-associated protein kinase that undergoes autophosphorylation and subsequently transfers the phosphate to MprA, and a protein phosphatase that dephosphorylates phospho-MprA. This chain is Signal transduction histidine-protein kinase/phosphatase MprB (mprB), found in Mycolicibacterium smegmatis (strain ATCC 700084 / mc(2)155) (Mycobacterium smegmatis).